A 675-amino-acid chain; its full sequence is DNA ligase (675 aa).

NAD(+) is bound by residues 33 to 37 (DAEYD), 82 to 83 (SL), and E114. The active-site N6-AMP-lysine intermediate is K116. NAD(+) contacts are provided by R137, E174, K291, and K315. Zn(2+)-binding residues include C409, C412, C427, and C433. A BRCT domain is found at 595–675 (AGDNPFAGKT…EMIRLLDQSK (81 aa)).

This sequence belongs to the NAD-dependent DNA ligase family. LigA subfamily. Mg(2+) is required as a cofactor. The cofactor is Mn(2+).

The enzyme catalyses NAD(+) + (deoxyribonucleotide)n-3'-hydroxyl + 5'-phospho-(deoxyribonucleotide)m = (deoxyribonucleotide)n+m + AMP + beta-nicotinamide D-nucleotide.. Its function is as follows. DNA ligase that catalyzes the formation of phosphodiester linkages between 5'-phosphoryl and 3'-hydroxyl groups in double-stranded DNA using NAD as a coenzyme and as the energy source for the reaction. It is essential for DNA replication and repair of damaged DNA. The sequence is that of DNA ligase from Proteus mirabilis (strain HI4320).